The primary structure comprises 500 residues: Probable cytosol aminopeptidase (500 aa).

The Mn(2+) site is built by lysine 264 and aspartate 269. Lysine 276 is a catalytic residue. Mn(2+) is bound by residues aspartate 287, aspartate 346, and glutamate 348. Arginine 350 is a catalytic residue.

The protein belongs to the peptidase M17 family. The cofactor is Mn(2+).

Its subcellular location is the cytoplasm. The catalysed reaction is Release of an N-terminal amino acid, Xaa-|-Yaa-, in which Xaa is preferably Leu, but may be other amino acids including Pro although not Arg or Lys, and Yaa may be Pro. Amino acid amides and methyl esters are also readily hydrolyzed, but rates on arylamides are exceedingly low.. The enzyme catalyses Release of an N-terminal amino acid, preferentially leucine, but not glutamic or aspartic acids.. Its function is as follows. Presumably involved in the processing and regular turnover of intracellular proteins. Catalyzes the removal of unsubstituted N-terminal amino acids from various peptides. The protein is Probable cytosol aminopeptidase of Rhodopseudomonas palustris (strain ATCC BAA-98 / CGA009).